A 148-amino-acid polypeptide reads, in one-letter code: Large ribosomal subunit protein uL15 (148 aa).

Residues 1–40 (MADILQMHDLKPAPGANKDRIRVGRGEGSKGKTSGRGDKG) are compositionally biased toward basic and acidic residues. The interval 1–47 (MADILQMHDLKPAPGANKDRIRVGRGEGSKGKTSGRGDKGTKKRYQV) is disordered.

This sequence belongs to the universal ribosomal protein uL15 family. In terms of assembly, part of the 50S ribosomal subunit.

In terms of biological role, binds to the 23S rRNA. In Bifidobacterium adolescentis (strain ATCC 15703 / DSM 20083 / NCTC 11814 / E194a), this protein is Large ribosomal subunit protein uL15.